The chain runs to 222 residues: Hexitol phosphatase B (222 aa).

Asp13 acts as the Nucleophile in catalysis. Positions 13 and 15 each coordinate a divalent metal cation. Substrate contacts are provided by residues 13–15, 115–116, and Lys148; these read DMD and SA. Catalysis depends on Asp15, which acts as the Proton donor. Asp173 contacts a divalent metal cation.

The protein belongs to the HAD-like hydrolase superfamily. CbbY/CbbZ/Gph/YieH family. Mg(2+) serves as cofactor. Requires Mn(2+) as cofactor. Co(2+) is required as a cofactor. It depends on Zn(2+) as a cofactor.

The catalysed reaction is sugar phosphate + H2O = sugar + phosphate.. It catalyses the reaction 2-deoxy-D-glucose 6-phosphate + H2O = 2-deoxy-D-glucose + phosphate. It carries out the reaction D-mannitol 1-phosphate + H2O = D-mannitol + phosphate. The enzyme catalyses D-sorbitol 6-phosphate + H2O = D-sorbitol + phosphate. In terms of biological role, sugar-phosphate phosphohydrolase that catalyzes the dephosphorylation of D-mannitol 1-phosphate and D-sorbitol 6-phosphate. Also catalyzes the dephosphorylation of 2-deoxyglucose 6-phosphate (2dGlu6P); this is a biologically important activity in vivo since it contributes to the elimination of this toxic compound and plays an important role in the resistance of E.coli to 2-deoxyglucose. This chain is Hexitol phosphatase B, found in Escherichia coli O157:H7.